We begin with the raw amino-acid sequence, 79 residues long: Sulfur carrier protein TusA (79 aa).

Residue C16 is the Cysteine persulfide intermediate of the active site.

It belongs to the sulfur carrier protein TusA family.

The protein resides in the cytoplasm. Functionally, sulfur carrier protein which probably makes part of a sulfur-relay system. This Pseudomonas paraeruginosa (strain DSM 24068 / PA7) (Pseudomonas aeruginosa (strain PA7)) protein is Sulfur carrier protein TusA.